The sequence spans 381 residues: Chymosin (381 aa).

Residues 1-16 (MRGFVVLLAVFALSQA) form the signal peptide. Positions 17 to 58 (SGIVRIPLHKGKSLRRALKERGLLEDFLKNHQHAVSRKHSNS) are cleaved as a propeptide — activation peptide. One can recognise a Peptidase A1 domain in the interval 74–378 (YFGKIYIGTP…DRASNLVGLA (305 aa)). Residue aspartate 92 is part of the active site. Residues 92 to 102 (DTGSSDLWVPS) form repeat 1. 2 cysteine pairs are disulfide-bonded: cysteine 105-cysteine 110 and cysteine 265-cysteine 269. Aspartate 274 is a catalytic residue. Residues 274–284 (DTGTSMLVGPG) form repeat 2. An intrachain disulfide couples cysteine 308 to cysteine 341.

It belongs to the peptidase A1 family. Monomer.

The catalysed reaction is Broad specificity similar to that of pepsin A. Clots milk by cleavage of a single 104-Ser-Phe-|-Met-Ala-107 bond in kappa-chain of casein.. Its activity is regulated as follows. Inhibited by pepstatin. Hydrolyzes a variety of proteins. In Callithrix jacchus (White-tufted-ear marmoset), this protein is Chymosin (CYM).